A 360-amino-acid chain; its full sequence is Histidinol-phosphate aminotransferase (360 aa).

At K211 the chain carries N6-(pyridoxal phosphate)lysine.

This sequence belongs to the class-II pyridoxal-phosphate-dependent aminotransferase family. Histidinol-phosphate aminotransferase subfamily. In terms of assembly, homodimer. The cofactor is pyridoxal 5'-phosphate.

The catalysed reaction is L-histidinol phosphate + 2-oxoglutarate = 3-(imidazol-4-yl)-2-oxopropyl phosphate + L-glutamate. It functions in the pathway amino-acid biosynthesis; L-histidine biosynthesis; L-histidine from 5-phospho-alpha-D-ribose 1-diphosphate: step 7/9. The chain is Histidinol-phosphate aminotransferase from Sodalis glossinidius (strain morsitans).